The primary structure comprises 270 residues: uncharacterized protein (270 aa).

This is an uncharacterized protein from Archaeoglobus fulgidus (strain ATCC 49558 / DSM 4304 / JCM 9628 / NBRC 100126 / VC-16).